Reading from the N-terminus, the 509-residue chain is Transmembrane protein 180 (509 aa).

Topologically, residues 1 to 10 (MGLRLLACLF) are extracellular. A helical transmembrane segment spans residues 11–42 (HLPTAVIYGSLSLFVSILHNVFLLYYVDTFVS). Topologically, residues 43–54 (VYKIDKLSFWIG) are cytoplasmic. A helical membrane pass occupies residues 55 to 73 (ETVFLIWNSLNDPLFGWLS). Residues 74-98 (DRVFLSTQQPGAEISSPEVVLKRLR) lie on the Extracellular side of the membrane. Residues 99–116 (ALSHNGPLFAISFLAFWV) form a helical membrane-spanning segment. Over 117–124 (AWAHPGLQ) the chain is Cytoplasmic. A helical membrane pass occupies residues 125–149 (FLLCLCMYDSFLTMVDLHHNALLAD). Residues 150–153 (LAVS) lie on the Extracellular side of the membrane. Residues 154–177 (AKDRTSLNFYCSFFSAIGSLSVFM) traverse the membrane as a helical segment. Residues 178-189 (SYAVWNKEDFFS) lie on the Cytoplasmic side of the membrane. The helical transmembrane segment at 190-221 (FRIFCIVLAFCSIVGFTLSTQLLRQRFETDGK) threads the bilayer. The Extracellular segment spans residues 222–259 (AKWDQESTLKELYIEKLSVPQEKRITLVEYLQQLSRHR). Residues 260–287 (NFLWFVCMNLIQVFHCHFNSNFFPLFLE) form a helical membrane-spanning segment. At 288–300 (HLLSDKISVSTGS) the chain is on the cytoplasmic side. Residues 301–320 (FLLGISYIAPHLNNLYFLSL) form a helical membrane-spanning segment. Topologically, residues 321 to 325 (CRRWG) are extracellular. The helical transmembrane segment at 326 to 345 (VYAVVRGLFFLKLALSVVML) threads the bilayer. The Cytoplasmic segment spans residues 346–353 (LAGPDQVY). A helical membrane pass occupies residues 354-388 (LLCIFIASNRVFTEGTCKLLNLVVTDLVDEDLVLN). The Extracellular portion of the chain corresponds to 389–397 (RRKQAASAL). The helical transmembrane segment at 398–424 (LFGMVALVTKPGQTFAPLIGTWLLCVY) threads the bilayer. Residues 425–458 (TGYDIFQRNPLSNVVSAQPKLESDTILEPTLRQG) lie on the Cytoplasmic side of the membrane. Residues 459–477 (CFYLLVFVPITCALLQLLS) form a helical membrane-spanning segment. The Extracellular portion of the chain corresponds to 478–509 (WTQFSLHGKRLQMVKAQRQGLMQGRAPEIKMI).

Its subcellular location is the cell membrane. This is Transmembrane protein 180 from Gallus gallus (Chicken).